The primary structure comprises 282 residues: 2-dehydro-3-deoxyphosphooctonate aldolase (282 aa).

Belongs to the KdsA family.

The protein localises to the cytoplasm. It catalyses the reaction D-arabinose 5-phosphate + phosphoenolpyruvate + H2O = 3-deoxy-alpha-D-manno-2-octulosonate-8-phosphate + phosphate. It functions in the pathway carbohydrate biosynthesis; 3-deoxy-D-manno-octulosonate biosynthesis; 3-deoxy-D-manno-octulosonate from D-ribulose 5-phosphate: step 2/3. Its pathway is bacterial outer membrane biogenesis; lipopolysaccharide biosynthesis. The sequence is that of 2-dehydro-3-deoxyphosphooctonate aldolase from Shewanella sp. (strain W3-18-1).